We begin with the raw amino-acid sequence, 404 residues long: Spore germination protein YndF (404 aa).

Positions 1 to 24 are cleaved as a signal peptide; that stretch reads MKSKLKRQLPAMVIVCLLMICVTG. A lipid anchor (N-palmitoyl cysteine) is attached at Cys25. Cys25 carries S-diacylglycerol cysteine lipidation.

Belongs to the GerABKC lipoprotein family.

The protein localises to the cell membrane. Functionally, may be involved in spore germination. This is Spore germination protein YndF (yndF) from Bacillus subtilis (strain 168).